Here is a 555-residue protein sequence, read N- to C-terminus: Methionine--tRNA ligase (555 aa).

The 'HIGH' region motif lies at 13 to 23 (PYANGSLHIGH). 4 residues coordinate Zn(2+): Cys144, Cys147, Cys157, and Cys160. Positions 330–334 (KISKS) match the 'KMSKS' region motif. Residue Lys333 participates in ATP binding.

This sequence belongs to the class-I aminoacyl-tRNA synthetase family. MetG type 1 subfamily. In terms of assembly, monomer. The cofactor is Zn(2+).

Its subcellular location is the cytoplasm. The catalysed reaction is tRNA(Met) + L-methionine + ATP = L-methionyl-tRNA(Met) + AMP + diphosphate. In terms of biological role, is required not only for elongation of protein synthesis but also for the initiation of all mRNA translation through initiator tRNA(fMet) aminoacylation. This is Methionine--tRNA ligase from Blochmanniella pennsylvanica (strain BPEN).